The following is a 161-amino-acid chain: Regulator of ribonuclease activity A (161 aa).

Belongs to the RraA family. In terms of assembly, homotrimer. Binds to both RNA-binding sites in the C-terminal region of Rne and to RhlB.

The protein resides in the cytoplasm. In terms of biological role, globally modulates RNA abundance by binding to RNase E (Rne) and regulating its endonucleolytic activity. Can modulate Rne action in a substrate-dependent manner by altering the composition of the degradosome. Modulates RNA-binding and helicase activities of the degradosome. The chain is Regulator of ribonuclease activity A from Escherichia fergusonii (strain ATCC 35469 / DSM 13698 / CCUG 18766 / IAM 14443 / JCM 21226 / LMG 7866 / NBRC 102419 / NCTC 12128 / CDC 0568-73).